Here is a 418-residue protein sequence, read N- to C-terminus: MTEETHPDDDSYIVRVKAVVMTRDDSSGGWFPQEGGGISRVGVCKVMHPEGNGRSGFLIHGERQKDKLVVLECYVRKDLVYTKANPTFHHWKVDNRKFGLTFQSPADARAFDRGVRKAIEDLIEGSTTSSSTIHNEAELGDDDVFTTATDSSSNSSQKREQPTRTVSSPTSCEHRRIYTLGHLHDSYPTDHYHLDQPMPRPYRQVSFPDDDEEIVRINPREKIWMTGYEDYRHAPVRGKYPDPSEDVDSSYVRFAKGEVPKHDYNYPYVDSSDFGLGEDPKGRGGSVIKTQPSRGKSRRRKEDGERSRCVYCRDMFNHEENRRGHCQDAPDSVRTCIRRVSCMWCADSMLYHCMSDPEGDYTDPCSCDTSDEKFCLRWMALIALSFLAPCMCCYLPLRACYHCGVMCRCCGGKHKAAA.

The region spanning 5–122 is the WH1 domain; it reads THPDDDSYIV…RGVRKAIEDL (118 aa). The interval 127–172 is disordered; that stretch reads TTSSSTIHNEAELGDDDVFTTATDSSSNSSQKREQPTRTVSSPTSC. Residues 146–156 show a composition bias toward polar residues; that stretch reads TTATDSSSNSS. The 57-residue stretch at 201–257 folds into the KBD domain; it reads PYRQVSFPDDDEEIVRINPREKIWMTGYEDYRHAPVRGKYPDPSEDVDSSYVRFAKG. The residue at position 206 (serine 206) is a Phosphoserine. Phosphotyrosine occurs at positions 228 and 231. The interval 275-302 is disordered; sequence GLGEDPKGRGGSVIKTQPSRGKSRRRKE. Positions 308 to 416 constitute an SPR domain; the sequence is RCVYCRDMFN…CRCCGGKHKA (109 aa).

In terms of assembly, homodimer and heterodimer. Able to interact with SPRED1 to form heterodimers. Interacts with RAS. May interact with ZDHHC13 (via ANK repeats) and ZDHHC17 (via ANK repeats). Interacts with TESK1. Interacts with NF1. Post-translationally, phosphorylated on serine and threonine residues. Phosphorylated on tyrosine. Phosphorylation of Tyr-228 and Tyr-231 are required for ubiquitination. In terms of processing, ubiquitinated; leading to degradation by the proteasome.

The protein localises to the cell membrane. It is found in the cytoplasmic vesicle. The protein resides in the secretory vesicle membrane. It localises to the cytoplasm. Functionally, negatively regulates Ras signaling pathways and downstream activation of MAP kinases. Recruits and translocates NF1 to the cell membrane, thereby enabling NF1-dependent hydrolysis of active GTP-bound Ras to inactive GDP-bound Ras. Inhibits fibroblast growth factor (FGF)-induced retinal lens fiber differentiation, probably by inhibiting FGF-mediated phosphorylation of ERK1/2. Inhibits TGFB-induced epithelial-to-mesenchymal transition in lens epithelial cells. The protein is Sprouty-related, EVH1 domain-containing protein 2 (SPRED2) of Pongo abelii (Sumatran orangutan).